Here is a 311-residue protein sequence, read N- to C-terminus: MTNPLYHKHIISINDLSRDELELVLRTAASLKKTPQPELLKHKVIASCFFEASTRTRLSFETSIHRLGASVVGFSDSSNTSLGKKGETLADTMSVISTYVDAIVMRHPQEGASRLAAQFSGNVPIVNAGDGANQHPTQTLLDLFTIQETQGRLDNINIAMVGDLKYGRTVHSLTQALAKFNGNHFFFIAPDALAMPAYILQMLEEKEIEYSLHESLEEVVPELDILYMTRVQKERLDPSEYANVKAQFILRSSDLTGARDNLKVLHPLPRIDEITTDVDKTPYAYYFQQAGNGIFARQALLALVLNAELAL.

Carbamoyl phosphate is bound by residues Arg55 and Thr56. Lys85 contributes to the L-aspartate binding site. Positions 106, 135, and 138 each coordinate carbamoyl phosphate. Positions 168 and 230 each coordinate L-aspartate. The carbamoyl phosphate site is built by Leu268 and Pro269.

It belongs to the aspartate/ornithine carbamoyltransferase superfamily. ATCase family. In terms of assembly, heterododecamer (2C3:3R2) of six catalytic PyrB chains organized as two trimers (C3), and six regulatory PyrI chains organized as three dimers (R2).

The enzyme catalyses carbamoyl phosphate + L-aspartate = N-carbamoyl-L-aspartate + phosphate + H(+). It participates in pyrimidine metabolism; UMP biosynthesis via de novo pathway; (S)-dihydroorotate from bicarbonate: step 2/3. In terms of biological role, catalyzes the condensation of carbamoyl phosphate and aspartate to form carbamoyl aspartate and inorganic phosphate, the committed step in the de novo pyrimidine nucleotide biosynthesis pathway. The polypeptide is Aspartate carbamoyltransferase catalytic subunit (Yersinia pseudotuberculosis serotype IB (strain PB1/+)).